The primary structure comprises 76 residues: MSKTITIADDVYYELVKMKGNKSFSELLRELIGKKKKGNLDILMIAFGTMSEEEVKEFKKKIKEVEEWINSWTPVS.

The protein belongs to the UPF0330 family.

Possibly the antitoxin component of a type II toxin-antitoxin (TA) system. Its cognate toxin is VapC2 (Potential). This is Putative antitoxin VapB2 (vapB2) from Pyrococcus abyssi (strain GE5 / Orsay).